Here is a 174-residue protein sequence, read N- to C-terminus: ATP-dependent protease subunit HslV (174 aa).

Residue T2 is part of the active site. Residues G157, C160, and T163 each coordinate Na(+).

Belongs to the peptidase T1B family. HslV subfamily. As to quaternary structure, a double ring-shaped homohexamer of HslV is capped on each side by a ring-shaped HslU homohexamer. The assembly of the HslU/HslV complex is dependent on binding of ATP.

It localises to the cytoplasm. It catalyses the reaction ATP-dependent cleavage of peptide bonds with broad specificity.. With respect to regulation, allosterically activated by HslU binding. Functionally, protease subunit of a proteasome-like degradation complex believed to be a general protein degrading machinery. The chain is ATP-dependent protease subunit HslV from Shewanella piezotolerans (strain WP3 / JCM 13877).